A 420-amino-acid polypeptide reads, in one-letter code: L-cysteine:1D-myo-inositol 2-amino-2-deoxy-alpha-D-glucopyranoside ligase (420 aa).

Cys-46 is a Zn(2+) binding site. L-cysteinyl-5'-AMP is bound by residues 46-49 (CGIT), Thr-61, and 84-86 (NVT). A 'HIGH' region motif is present at residues 48–58 (ITPYDSTHLGH). Residues 194-199 (ERGGDP) carry the 'ERGGDP' region motif. L-cysteinyl-5'-AMP is bound at residue Trp-235. Cys-239 lines the Zn(2+) pocket. Residue 257–259 (GTD) participates in L-cysteinyl-5'-AMP binding. Position 264 (His-264) interacts with Zn(2+). Val-291 is an L-cysteinyl-5'-AMP binding site. The 'KMSKS' region motif lies at 297–301 (KMSKS).

This sequence belongs to the class-I aminoacyl-tRNA synthetase family. MshC subfamily. Monomer. Requires Zn(2+) as cofactor.

The catalysed reaction is 1D-myo-inositol 2-amino-2-deoxy-alpha-D-glucopyranoside + L-cysteine + ATP = 1D-myo-inositol 2-(L-cysteinylamino)-2-deoxy-alpha-D-glucopyranoside + AMP + diphosphate + H(+). Its function is as follows. Catalyzes the ATP-dependent condensation of GlcN-Ins and L-cysteine to form L-Cys-GlcN-Ins. This chain is L-cysteine:1D-myo-inositol 2-amino-2-deoxy-alpha-D-glucopyranoside ligase, found in Beutenbergia cavernae (strain ATCC BAA-8 / DSM 12333 / CCUG 43141 / JCM 11478 / NBRC 16432 / NCIMB 13614 / HKI 0122).